A 1099-amino-acid polypeptide reads, in one-letter code: Solute carrier family 12 member 1 (1099 aa).

Over 1-177 (MSLNNSSSVF…EDNKAGAVKF (177 aa)) the chain is Cytoplasmic. The RFXV motif signature appears at 20–23 (RFQV). Phosphoserine is present on residues Ser60 and Ser90. Phosphothreonine is present on residues Thr94, Thr99, Thr104, and Thr117. Ser119 carries the post-translational modification Phosphoserine. Ser129 is modified (phosphoserine; by AMPK). Phosphoserine is present on Ser147. The interval 147–169 (SADRVANGEGMPGEEHAENKEED) is disordered. The span at 159 to 169 (GEEHAENKEED) shows a compositional bias: basic and acidic residues. A helical membrane pass occupies residues 178–198 (GWVKGVLVRCMLNIWGVMLFI). The Extracellular segment spans residues 199–201 (RLS). Residues 202 to 222 (WIVGEAGIGLGVVIILLSTMV) traverse the membrane as a helical segment. The Cytoplasmic segment spans residues 223-259 (TSITGLSTSAIATNGFVRGGGAYYLISRSLGPEFGGS). Residues 260-280 (IGLIFAFANAVAVAMYVVGFA) traverse the membrane as a helical segment. The Extracellular portion of the chain corresponds to 281 to 302 (ETVVDLLKESDSMMVDPTNDIR). A helical transmembrane segment spans residues 303–323 (IIGSITVVILLGISVAGMEWE). Over 324 to 327 (AKAQ) the chain is Cytoplasmic. The helical transmembrane segment at 328 to 348 (VILLIILLIAIANFFIGTVIP) threads the bilayer. At 349–379 (SNNEKKSRGFFNYQASIFAENFGPSFTKGEG) the chain is on the extracellular side. A helical membrane pass occupies residues 380–400 (FFSVFAIFFPAATGILAGANI). Residues 401 to 417 (SGDLEDPQDAIPRGTML) are Cytoplasmic-facing. The chain crosses the membrane as a helical span at residues 418-438 (AIFITTVAYIGVAICVGACVV). Topologically, residues 439–550 (RDATGSMNDT…NNEPLRGYIL (112 aa)) are extracellular. Residues Asn446 and Asn456 are each glycosylated (N-linked (GlcNAc...) asparagine). 2 consecutive transmembrane segments (helical) span residues 551-571 (TFVI…APII) and 572-592 (SNFF…ASYA). Topologically, residues 593–609 (KSPGWRPAYGIYNMWVS) are extracellular. A helical transmembrane segment spans residues 610–630 (LFGAVLCCAVMFVINWWAAVI). Topologically, residues 631-1099 (TYVIEFFLYI…NHKNVLTFYS (469 aa)) are cytoplasmic.

It belongs to the SLC12A transporter family. When phosphorylated, interacts with PPP3CB. Post-translationally, phosphorylated at Ser-90, Thr-99 and Thr-104 by OXSR1/OSR1 and STK39/SPAK downstream of WNK kinases (WNK1, WNK2, WNK3 or WNK4), promoting its activity. As to expression, predominant in kidney. The 3 isoforms are differentially distributed within the kidney: B almost exclusively in cortex, F almost exclusively in medulla, and A about equally distributed.

The protein localises to the apical cell membrane. It carries out the reaction K(+)(out) + 2 chloride(out) + Na(+)(out) = K(+)(in) + 2 chloride(in) + Na(+)(in). With respect to regulation, activated following phosphorylation by OXSR1/OSR1 and STK39/SPAK downstream of WNK kinases (WNK1, WNK2, WNK3 or WNK4). In terms of biological role, renal sodium, potassium and chloride ion cotransporter that mediates the transepithelial NaCl reabsorption in the thick ascending limb and plays an essential role in the urinary concentration and volume regulation. Electrically silent transporter system. The chain is Solute carrier family 12 member 1 (SLC12A1) from Oryctolagus cuniculus (Rabbit).